A 206-amino-acid polypeptide reads, in one-letter code: Large ribosomal subunit protein uL4 (206 aa).

Residues 47–77 (GTQSTKTRSEVRGGGIKPWRQKGTGRARQGS) are disordered.

The protein belongs to the universal ribosomal protein uL4 family. In terms of assembly, part of the 50S ribosomal subunit.

Functionally, one of the primary rRNA binding proteins, this protein initially binds near the 5'-end of the 23S rRNA. It is important during the early stages of 50S assembly. It makes multiple contacts with different domains of the 23S rRNA in the assembled 50S subunit and ribosome. Its function is as follows. Forms part of the polypeptide exit tunnel. The sequence is that of Large ribosomal subunit protein uL4 from Clostridium beijerinckii (strain ATCC 51743 / NCIMB 8052) (Clostridium acetobutylicum).